The following is a 509-amino-acid chain: DNA primase large subunit (509 aa).

Residues 253 to 270 (LSHSYTGQDYSTQGNVGK) form an interdomain linker region. The interval 266–509 (GNVGKISLDQ…GLEDYFSEDS (244 aa)) is interacts with PRIM1. Cys-287, Cys-367, Cys-384, and Cys-424 together coordinate [4Fe-4S] cluster. An RNA:DNA duplex-binding region spans residues 300–442 (HLRHGGRMQY…NVDDCGFSLN (143 aa)). The segment at 461–486 (IKKEPIQPETPQPKPSVQKTKDASSA) is disordered. The residue at position 470 (Thr-470) is a Phosphothreonine.

Belongs to the eukaryotic-type primase large subunit family. In terms of assembly, heterodimer of a catalytic subunit PRIM1 and a regulatory subunit PRIM2, also known as the DNA primase complex. Interacts via (C-terminus) with PRIM1. Component of the alpha DNA polymerase complex (also known as the alpha DNA polymerase-primase complex) consisting of four subunits: the catalytic subunit POLA1, the regulatory subunit POLA2, and the primase complex subunits PRIM1 and PRIM2 respectively. Within the complex, POLA1 directly interacts with PRIM2. Requires [4Fe-4S] cluster as cofactor.

Functionally, regulatory subunit of the DNA primase complex and component of the DNA polymerase alpha complex (also known as the alpha DNA polymerase-primase complex) which play an essential role in the initiation of DNA synthesis. During the S phase of the cell cycle, the DNA polymerase alpha complex (composed of a catalytic subunit POLA1, an accessory subunit POLA2 and two primase subunits, the catalytic subunit PRIM1 and the regulatory subunit PRIM2) is recruited to DNA at the replicative forks via direct interactions with MCM10 and WDHD1. The primase subunit of the polymerase alpha complex initiates DNA synthesis by oligomerising short RNA primers on both leading and lagging strands. These primers are initially extended by the polymerase alpha catalytic subunit and subsequently transferred to polymerase delta and polymerase epsilon for processive synthesis on the lagging and leading strand, respectively. In the primase complex, both subunits are necessary for the initial di-nucleotide formation, but the extension of the primer depends only on the catalytic subunit. Binds RNA:DNA duplex and coordinates the catalytic activities of PRIM1 and POLA2 during primase-to-polymerase switch. This is DNA primase large subunit (PRIM2) from Homo sapiens (Human).